Here is a 167-residue protein sequence, read N- to C-terminus: Arginine repressor (167 aa).

Belongs to the ArgR family.

The protein localises to the cytoplasm. It functions in the pathway amino-acid biosynthesis; L-arginine biosynthesis [regulation]. Regulates arginine biosynthesis genes. This Mycobacterium leprae (strain Br4923) protein is Arginine repressor.